The chain runs to 235 residues: Purine nucleoside phosphorylase DeoD-type (235 aa).

Histidine 4 serves as a coordination point for a purine D-ribonucleoside. Phosphate contacts are provided by residues glycine 20, arginine 24, arginine 43, and 87–90 (RVGT). A purine D-ribonucleoside is bound by residues glutamate 162, 179–181 (EME), and 203–204 (SD). The active-site Proton donor is aspartate 204.

The protein belongs to the PNP/UDP phosphorylase family. Homohexamer; trimer of homodimers.

The catalysed reaction is a purine D-ribonucleoside + phosphate = a purine nucleobase + alpha-D-ribose 1-phosphate. It catalyses the reaction a purine 2'-deoxy-D-ribonucleoside + phosphate = a purine nucleobase + 2-deoxy-alpha-D-ribose 1-phosphate. Its function is as follows. Catalyzes the reversible phosphorolytic breakdown of the N-glycosidic bond in the beta-(deoxy)ribonucleoside molecules, with the formation of the corresponding free purine bases and pentose-1-phosphate. This is Purine nucleoside phosphorylase DeoD-type from Bacillus cereus (strain ATCC 14579 / DSM 31 / CCUG 7414 / JCM 2152 / NBRC 15305 / NCIMB 9373 / NCTC 2599 / NRRL B-3711).